The primary structure comprises 121 residues: Large ribosomal subunit protein bL12 (121 aa).

This sequence belongs to the bacterial ribosomal protein bL12 family. Homodimer. Part of the ribosomal stalk of the 50S ribosomal subunit. Forms a multimeric L10(L12)X complex, where L10 forms an elongated spine to which 2 to 4 L12 dimers bind in a sequential fashion. Binds GTP-bound translation factors.

Functionally, forms part of the ribosomal stalk which helps the ribosome interact with GTP-bound translation factors. Is thus essential for accurate translation. This chain is Large ribosomal subunit protein bL12, found in Bacillus pumilus (strain SAFR-032).